The chain runs to 506 residues: Trans-cinnamate 4-monooxygenase (506 aa).

The chain crosses the membrane as a helical span at residues 3–23 (DFVLLEKALLGLFIATIVAIT). Residues 214-219 (RSRLAQ) and alanine 307 each bind (E)-cinnamate. Cysteine 448 contributes to the heme binding site.

Belongs to the cytochrome P450 family. It depends on heme as a cofactor.

The protein resides in the membrane. The enzyme catalyses (E)-cinnamate + reduced [NADPH--hemoprotein reductase] + O2 = (E)-4-coumarate + oxidized [NADPH--hemoprotein reductase] + H2O + H(+). Its pathway is phenylpropanoid metabolism; trans-4-coumarate biosynthesis; trans-4-coumarate from trans-cinnamate: step 1/1. In terms of biological role, catalyzes the first oxidative step of the phenylpropanoid pathway in higher plants by transforming trans-cinnamate into p-coumarate. The compounds formed by this pathway are essential components for lignification, pollination, and defense against ultraviolet light, predators and pathogens. The sequence is that of Trans-cinnamate 4-monooxygenase (CYP73A10) from Petroselinum crispum (Parsley).